The following is a 345-amino-acid chain: Ribosomal RNA small subunit methyltransferase H (345 aa).

S-adenosyl-L-methionine-binding positions include 47–49 (GGY), aspartate 65, phenylalanine 92, aspartate 113, and glutamine 120. The interval 296 to 345 (EPGPDEVAGNPRARSAKLRAAERTNAPAHPGGDLMGLLPAPPPQRHGRRR) is disordered.

Belongs to the methyltransferase superfamily. RsmH family.

Its subcellular location is the cytoplasm. The catalysed reaction is cytidine(1402) in 16S rRNA + S-adenosyl-L-methionine = N(4)-methylcytidine(1402) in 16S rRNA + S-adenosyl-L-homocysteine + H(+). Its function is as follows. Specifically methylates the N4 position of cytidine in position 1402 (C1402) of 16S rRNA. This Xanthobacter autotrophicus (strain ATCC BAA-1158 / Py2) protein is Ribosomal RNA small subunit methyltransferase H.